The chain runs to 655 residues: Probable alpha-galactosidase D (655 aa).

Residues 1 to 16 form the signal peptide; it reads MASVIALSLLLPAAFA. 2 N-linked (GlcNAc...) asparagine glycosylation sites follow: N87 and N93. A disulfide bridge connects residues C126 and C153. The active-site Nucleophile is D151. 196 to 200 serves as a coordination point for substrate; the sequence is EWGID. The Proton donor role is filled by D218. Residues N432, N482, N502, N540, and N579 are each glycosylated (N-linked (GlcNAc...) asparagine).

It belongs to the glycosyl hydrolase 27 family.

It localises to the secreted. The enzyme catalyses Hydrolysis of terminal, non-reducing alpha-D-galactose residues in alpha-D-galactosides, including galactose oligosaccharides, galactomannans and galactolipids.. Functionally, hydrolyzes a variety of simple alpha-D-galactoside as well as more complex molecules such as oligosaccharides and polysaccharides. The chain is Probable alpha-galactosidase D (aglD) from Aspergillus terreus (strain NIH 2624 / FGSC A1156).